A 314-amino-acid polypeptide reads, in one-letter code: Homoserine O-succinyltransferase (314 aa).

Cys142 functions as the Acyl-thioester intermediate in the catalytic mechanism. Positions 163 and 192 each coordinate substrate. The Proton acceptor role is filled by His235. Residue Glu237 is part of the active site. Residue Arg249 participates in substrate binding.

It belongs to the MetA family.

The protein localises to the cytoplasm. The catalysed reaction is L-homoserine + succinyl-CoA = O-succinyl-L-homoserine + CoA. Its pathway is amino-acid biosynthesis; L-methionine biosynthesis via de novo pathway; O-succinyl-L-homoserine from L-homoserine: step 1/1. Its function is as follows. Transfers a succinyl group from succinyl-CoA to L-homoserine, forming succinyl-L-homoserine. The chain is Homoserine O-succinyltransferase from Shewanella woodyi (strain ATCC 51908 / MS32).